The following is a 433-amino-acid chain: Glutamate-1-semialdehyde 2,1-aminomutase (433 aa).

Residue Lys269 is modified to N6-(pyridoxal phosphate)lysine.

It belongs to the class-III pyridoxal-phosphate-dependent aminotransferase family. HemL subfamily. As to quaternary structure, homodimer. The cofactor is pyridoxal 5'-phosphate.

The protein resides in the cytoplasm. It carries out the reaction (S)-4-amino-5-oxopentanoate = 5-aminolevulinate. It functions in the pathway porphyrin-containing compound metabolism; protoporphyrin-IX biosynthesis; 5-aminolevulinate from L-glutamyl-tRNA(Glu): step 2/2. In Francisella philomiragia subsp. philomiragia (strain ATCC 25017 / CCUG 19701 / FSC 153 / O#319-036), this protein is Glutamate-1-semialdehyde 2,1-aminomutase.